The following is a 2505-amino-acid chain: Fatty acid synthase (2505 aa).

N-acetylmethionine is present on Met1. Residues 1-406 (MEEVVIAGMS…GANVHVILQP (406 aa)) form the Ketosynthase family 3 (KS3) domain. N6-acetyllysine is present on Lys59. Position 63 is a phosphoserine (Ser63). Position 70 is an N6-acetyllysine (Lys70). Cys161 functions as the For beta-ketoacyl synthase activity in the catalytic mechanism. Phosphoserine is present on Ser207. Catalysis depends on His293, which acts as the For beta-ketoacyl synthase activity. Residue Lys298 is modified to N6-acetyllysine. Residue His331 is the For beta-ketoacyl synthase activity of the active site. The acyl and malonyl transferases stretch occupies residues 429–817 (RTMEAVQGLL…IDINPNALFP (389 aa)). Residue Lys528 is modified to N6-acetyllysine. The active-site For malonyltransferase activity is the Ser581. An acyl-CoA is bound by residues 647-648 (DT) and Phe671. At Lys673 the chain carries N6-acetyllysine. Ser725 carries the phosphoserine modification. Residue Arg773 coordinates an acyl-CoA. Position 790 is an N6-acetyllysine (Lys790). An N-terminal hotdog fold region spans residues 844-966 (IPVAEDFPNG…KVYQWEDPDS (123 aa)). Residues 844–1112 (IPVAEDFPNG…TSRRQQEQLV (269 aa)) enclose the PKS/mFAS DH domain. Catalysis depends on His878, which acts as the Proton acceptor; for dehydratase activity. The C-terminal hotdog fold stretch occupies residues 983–1112 (VSRLTQGEVY…TSRRQQEQLV (130 aa)). Lys993 is subject to N6-acetyllysine. Asp1032 serves as the catalytic Proton donor; for dehydratase activity. Lys1276 bears the N6-acetyllysine mark. Cys1464 is modified (S-nitrosocysteine). Phosphoserine is present on residues Ser1578 and Ser1588. Positions 1629-1857 (DVPSSWTLEE…VQVREEEPEA (229 aa)) are enoyl reductase. 1665–1682 (VLIHSGSGGVGQAAISIA) is an NADP(+) binding site. At Lys1698 the chain carries N6-(pyridoxal phosphate)lysine; alternate. At Lys1698 the chain carries N6-acetyllysine; alternate. An N6-acetyllysine mark is found at Lys1765, Lys1841, and Lys1989. 1765–1780 (KFDLSNNHPLGMAIFL) serves as a coordination point for NADP(+). The tract at residues 1858–2113 (MLPGAQPTLI…VLAEKKAVAH (256 aa)) is beta-ketoacyl reductase. Cys2085 carries the post-translational modification S-nitrosocysteine. Residues 2113–2193 (HGDGEAQRDL…EMSSKAGSDT (81 aa)) form the Carrier domain. At Ser2151 the chain carries O-(pantetheine 4'-phosphoryl)serine; alternate. Ser2151 is modified (phosphoserine; alternate). Phosphoserine occurs at positions 2191 and 2230. The tract at residues 2202 to 2505 (NDTSLKQAQL…AEPRVSVREG (304 aa)) is thioesterase. Catalysis depends on Ser2302, which acts as the For thioesterase activity. Lys2385 bears the N6-acetyllysine mark. A Glycyl lysine isopeptide (Lys-Gly) (interchain with G-Cter in SUMO2) cross-link involves residue Lys2443. Residue His2475 is the For thioesterase activity of the active site.

As to quaternary structure, homodimer which is arranged in a head to tail fashion. Interacts with CEACAM1; this interaction is insulin and phosphorylation-dependent; reduces fatty-acid synthase activity. Post-translationally, S-nitrosylation of Fatty acid synthase at cysteine residues Cys-1464 or Cys-2085 is important for the enzyme dimerization. In adipocytes, S-nitrosylation of Fatty acid synthase occurs under physiological conditions and gradually increases during adipogenesis.

Its subcellular location is the cytoplasm. The protein resides in the melanosome. The catalysed reaction is acetyl-CoA + n malonyl-CoA + 2n NADPH + 2n H(+) = a long-chain fatty acid + (n+1) CoA + n CO2 + 2n NADP(+).. The enzyme catalyses holo-[ACP] + acetyl-CoA = acetyl-[ACP] + CoA. It carries out the reaction holo-[ACP] + malonyl-CoA = malonyl-[ACP] + CoA. It catalyses the reaction a fatty acyl-[ACP] + malonyl-[ACP] + H(+) = a 3-oxoacyl-[ACP] + holo-[ACP] + CO2. The catalysed reaction is a (3R)-hydroxyacyl-[ACP] + NADP(+) = a 3-oxoacyl-[ACP] + NADPH + H(+). The enzyme catalyses a (3R)-hydroxyacyl-[ACP] = a (2E)-enoyl-[ACP] + H2O. It carries out the reaction a 2,3-saturated acyl-[ACP] + NADP(+) = a (2E)-enoyl-[ACP] + NADPH + H(+). It catalyses the reaction hexadecanoyl-[ACP] + H2O = hexadecanoate + holo-[ACP] + H(+). The catalysed reaction is acetyl-[ACP] + malonyl-[ACP] + H(+) = 3-oxobutanoyl-[ACP] + holo-[ACP] + CO2. The enzyme catalyses 3-oxobutanoyl-[ACP] + NADPH + H(+) = (3R)-hydroxybutanoyl-[ACP] + NADP(+). It carries out the reaction (3R)-hydroxybutanoyl-[ACP] = (2E)-butenoyl-[ACP] + H2O. It catalyses the reaction (2E)-butenoyl-[ACP] + NADPH + H(+) = butanoyl-[ACP] + NADP(+). The catalysed reaction is butanoyl-[ACP] + malonyl-[ACP] + H(+) = 3-oxohexanoyl-[ACP] + holo-[ACP] + CO2. The enzyme catalyses 3-oxohexanoyl-[ACP] + NADPH + H(+) = (3R)-hydroxyhexanoyl-[ACP] + NADP(+). It carries out the reaction (3R)-hydroxyhexanoyl-[ACP] = (2E)-hexenoyl-[ACP] + H2O. It catalyses the reaction (2E)-hexenoyl-[ACP] + NADPH + H(+) = hexanoyl-[ACP] + NADP(+). The catalysed reaction is hexanoyl-[ACP] + malonyl-[ACP] + H(+) = 3-oxooctanoyl-[ACP] + holo-[ACP] + CO2. The enzyme catalyses 3-oxooctanoyl-[ACP] + NADPH + H(+) = (3R)-hydroxyoctanoyl-[ACP] + NADP(+). It carries out the reaction (3R)-hydroxyoctanoyl-[ACP] = (2E)-octenoyl-[ACP] + H2O. It catalyses the reaction (2E)-octenoyl-[ACP] + NADPH + H(+) = octanoyl-[ACP] + NADP(+). The catalysed reaction is octanoyl-[ACP] + malonyl-[ACP] + H(+) = 3-oxodecanoyl-[ACP] + holo-[ACP] + CO2. The enzyme catalyses 3-oxodecanoyl-[ACP] + NADPH + H(+) = (3R)-hydroxydecanoyl-[ACP] + NADP(+). It carries out the reaction (3R)-hydroxydecanoyl-[ACP] = (2E)-decenoyl-[ACP] + H2O. It catalyses the reaction (2E)-decenoyl-[ACP] + NADPH + H(+) = decanoyl-[ACP] + NADP(+). The catalysed reaction is decanoyl-[ACP] + malonyl-[ACP] + H(+) = 3-oxododecanoyl-[ACP] + holo-[ACP] + CO2. The enzyme catalyses 3-oxododecanoyl-[ACP] + NADPH + H(+) = (3R)-hydroxydodecanoyl-[ACP] + NADP(+). It carries out the reaction (3R)-hydroxydodecanoyl-[ACP] = (2E)-dodecenoyl-[ACP] + H2O. It catalyses the reaction (2E)-dodecenoyl-[ACP] + NADPH + H(+) = dodecanoyl-[ACP] + NADP(+). The catalysed reaction is dodecanoyl-[ACP] + malonyl-[ACP] + H(+) = 3-oxotetradecanoyl-[ACP] + holo-[ACP] + CO2. The enzyme catalyses 3-oxotetradecanoyl-[ACP] + NADPH + H(+) = (3R)-hydroxytetradecanoyl-[ACP] + NADP(+). It carries out the reaction (3R)-hydroxytetradecanoyl-[ACP] = (2E)-tetradecenoyl-[ACP] + H2O. It catalyses the reaction (2E)-tetradecenoyl-[ACP] + NADPH + H(+) = tetradecanoyl-[ACP] + NADP(+). The catalysed reaction is tetradecanoyl-[ACP] + malonyl-[ACP] + H(+) = 3-oxohexadecanoyl-[ACP] + holo-[ACP] + CO2. The enzyme catalyses 3-oxohexadecanoyl-[ACP] + NADPH + H(+) = (3R)-hydroxyhexadecanoyl-[ACP] + NADP(+). It carries out the reaction (3R)-hydroxyhexadecanoyl-[ACP] = (2E)-hexadecenoyl-[ACP] + H2O. It catalyses the reaction (2E)-hexadecenoyl-[ACP] + NADPH + H(+) = hexadecanoyl-[ACP] + NADP(+). The catalysed reaction is hexadecanoyl-[ACP] + malonyl-[ACP] + H(+) = 3-oxooctadecanoyl-[ACP] + holo-[ACP] + CO2. The enzyme catalyses 3-oxooctadecanoyl-[ACP] + NADPH + H(+) = (3R)-hydroxyoctadecanoyl-[ACP] + NADP(+). It carries out the reaction (3R)-hydroxyoctadecanoyl-[ACP] = (2E)-octadecenoyl-[ACP] + H2O. It catalyses the reaction (2E)-octadecenoyl-[ACP] + NADPH + H(+) = octadecanoyl-[ACP] + NADP(+). The catalysed reaction is tetradecanoyl-[ACP] + H2O = tetradecanoate + holo-[ACP] + H(+). The enzyme catalyses octadecanoyl-[ACP] + H2O = octadecanoate + holo-[ACP] + H(+). Its pathway is lipid metabolism; fatty acid biosynthesis. With respect to regulation, cerulenin, a potent non-competitive pharmacological inhibitor of FAS, binds covalently to the active site of the condensing enzyme region, inactivating a key enzyme step in fatty acid synthesis. Another inhibitor, though less efficient, is C75, a member of the alpha-methylene-gamma-butyrolactone chemical class, also proposed as an antitumour and anti-obesity agent. Functionally, fatty acid synthetase is a multifunctional enzyme that catalyzes the de novo biosynthesis of long-chain saturated fatty acids starting from acetyl-CoA and malonyl-CoA in the presence of NADPH. This multifunctional protein contains 7 catalytic activities and a site for the binding of the prosthetic group 4'-phosphopantetheine of the acyl carrier protein ([ACP]) domain. The protein is Fatty acid synthase (Fasn) of Rattus norvegicus (Rat).